A 341-amino-acid polypeptide reads, in one-letter code: Ferrochelatase (341 aa).

His196 and Glu277 together coordinate Fe cation.

The protein belongs to the ferrochelatase family.

The protein resides in the cytoplasm. It carries out the reaction heme b + 2 H(+) = protoporphyrin IX + Fe(2+). It functions in the pathway porphyrin-containing compound metabolism; protoheme biosynthesis; protoheme from protoporphyrin-IX: step 1/1. In terms of biological role, catalyzes the ferrous insertion into protoporphyrin IX. This Synechococcus sp. (strain JA-3-3Ab) (Cyanobacteria bacterium Yellowstone A-Prime) protein is Ferrochelatase.